Consider the following 369-residue polypeptide: DNA polymerase processivity factor (369 aa).

The segment at 345–369 (IGSRKRGPSSPPFEREGKLAKVINQ) is disordered.

Belongs to the herpesviridae DNA polymerase processivity factor family. As to quaternary structure, interacts with the DNA polymerase catalytic subunit. Interacts with the origin-binding protein.

It is found in the host nucleus. Plays an essential role in viral DNA replication by acting as the polymerase accessory subunit. Associates with the viral polymerase to increase its processivity and forms high-affinity direct interactions with DNA. Facilitates the origin-binding protein UL9 loading onto DNA thus increasing its ability to assemble into a functional complex capable of unwinding duplex DNA. This chain is DNA polymerase processivity factor (MDV055), found in Gallus gallus (Chicken).